A 1538-amino-acid polypeptide reads, in one-letter code: Lysophospholipase nte1 (1538 aa).

Over 1–74 the chain is Cytoplasmic; the sequence is MATDGGPLAA…PPPTPSTMAG (74 aa). The helical transmembrane segment at 75-95 threads the bilayer; sequence WFGWVFSFFFQVIPSVLYWVI. Residues 96-117 are Lumenal-facing; that stretch reads TFATITLPTWLFTLFSMSLTFT. The chain crosses the membrane as a helical span at residues 118-138; that stretch reads MNFTTLLLIALAIVSTISWFI. Residues 139–1538 are Cytoplasmic-facing; the sequence is RYRFLNMYSR…RTLAPRRASI (1400 aa). 3 disordered regions span residues 242–264, 302–393, and 529–559; these read KPNVDEGSNHMGAESSDEDDHRV, EGSS…KSVH, and AAQSKRPVSMASPEDISGDRESAGPSPGDLL. The span at 302-314 shows a compositional bias: low complexity; sequence EGSSSSASSVGPS. Over residues 329 to 345 the composition is skewed to basic and acidic residues; that stretch reads GLEDSPRSNFVRDHGDS. A nucleoside 3',5'-cyclic phosphate is bound by residues 692–811 and 856–976; these read GGTS…QGYV and RLTS…IAQR. Residues 1235–1399 enclose the PNPLA domain; sequence LVLGGGGARG…IDNLTVTHMK (165 aa). A GXGXXG motif is present at residues 1239-1244; that stretch reads GGGARG. The GXSXG motif lies at 1266–1270; it reads GTSIG. Ser1268 (nucleophile) is an active-site residue. Asp1386 serves as the catalytic Proton acceptor. The DGA/G signature appears at 1386-1388; sequence DGG. The tract at residues 1517–1538 is disordered; the sequence is LPEETEEKKKLQRTLAPRRASI.

The protein belongs to the NTE family.

The protein localises to the endoplasmic reticulum membrane. It carries out the reaction a 1-acyl-sn-glycero-3-phosphocholine + H2O = sn-glycerol 3-phosphocholine + a fatty acid + H(+). Its activity is regulated as follows. Inhibited by organophosphorus esters. In terms of biological role, intracellular phospholipase B that catalyzes the double deacylation of phosphatidylcholine (PC) to glycerophosphocholine (GroPCho). Plays an important role in membrane lipid homeostasis. Responsible for the rapid PC turnover in response to inositol, elevated temperatures, or when choline is present in the growth medium. This Aspergillus oryzae (strain ATCC 42149 / RIB 40) (Yellow koji mold) protein is Lysophospholipase nte1 (nte1).